A 328-amino-acid chain; its full sequence is Cytochrome f (328 aa).

Residues 1-44 (MRNPDTLGLWTKTMVALRRFTVLAIATVSVFLITDLGLPQAASA) form the signal peptide. Tyr-45, Cys-66, Cys-69, and His-70 together coordinate heme. The chain crosses the membrane as a helical span at residues 296–313 (FLVLFLAGIMLSQILLVL).

It belongs to the cytochrome f family. As to quaternary structure, the 4 large subunits of the cytochrome b6-f complex are cytochrome b6, subunit IV (17 kDa polypeptide, PetD), cytochrome f and the Rieske protein, while the 4 small subunits are PetG, PetL, PetM and PetN. The complex functions as a dimer. It depends on heme as a cofactor.

Its subcellular location is the cellular thylakoid membrane. In terms of biological role, component of the cytochrome b6-f complex, which mediates electron transfer between photosystem II (PSII) and photosystem I (PSI), cyclic electron flow around PSI, and state transitions. The chain is Cytochrome f (petA) from Synechocystis sp. (strain ATCC 27184 / PCC 6803 / Kazusa).